The sequence spans 236 residues: Biosynthetic peptidoglycan transglycosylase (236 aa).

A helical membrane pass occupies residues 20–40 (LVFIVLSVLILPYALIGLYLL).

Belongs to the glycosyltransferase 51 family.

It is found in the cell inner membrane. It carries out the reaction [GlcNAc-(1-&gt;4)-Mur2Ac(oyl-L-Ala-gamma-D-Glu-L-Lys-D-Ala-D-Ala)](n)-di-trans,octa-cis-undecaprenyl diphosphate + beta-D-GlcNAc-(1-&gt;4)-Mur2Ac(oyl-L-Ala-gamma-D-Glu-L-Lys-D-Ala-D-Ala)-di-trans,octa-cis-undecaprenyl diphosphate = [GlcNAc-(1-&gt;4)-Mur2Ac(oyl-L-Ala-gamma-D-Glu-L-Lys-D-Ala-D-Ala)](n+1)-di-trans,octa-cis-undecaprenyl diphosphate + di-trans,octa-cis-undecaprenyl diphosphate + H(+). It participates in cell wall biogenesis; peptidoglycan biosynthesis. Functionally, peptidoglycan polymerase that catalyzes glycan chain elongation from lipid-linked precursors. The polypeptide is Biosynthetic peptidoglycan transglycosylase (Rhizobium meliloti (strain 1021) (Ensifer meliloti)).